The sequence spans 362 residues: Heme A synthase (362 aa).

5 helical membrane passes run 12 to 32 (AVKI…LVGG), 102 to 122 (VIGL…HLGG), 128 to 148 (LWLI…MVAS), 159 to 179 (ERLA…VWTL), and 198 to 218 (AAAL…VAGL). His262 contacts heme. 3 helical membrane passes run 264–286 (MLAY…ARAG), 291–311 (GAVW…FTLL), and 314–334 (VPIG…MLGV). A heme-binding site is contributed by His322.

The protein belongs to the COX15/CtaA family. Type 2 subfamily. As to quaternary structure, interacts with CtaB. Requires heme b as cofactor.

It is found in the cell membrane. The catalysed reaction is Fe(II)-heme o + 2 A + H2O = Fe(II)-heme a + 2 AH2. It functions in the pathway porphyrin-containing compound metabolism; heme A biosynthesis; heme A from heme O: step 1/1. In terms of biological role, catalyzes the conversion of heme O to heme A by two successive hydroxylations of the methyl group at C8. The first hydroxylation forms heme I, the second hydroxylation results in an unstable dihydroxymethyl group, which spontaneously dehydrates, resulting in the formyl group of heme A. This Rhodopseudomonas palustris (strain BisA53) protein is Heme A synthase.